A 145-amino-acid polypeptide reads, in one-letter code: D-aminoacyl-tRNA deacylase (145 aa).

The Gly-cisPro motif, important for rejection of L-amino acids motif lies at 137–138; sequence GP.

This sequence belongs to the DTD family. As to quaternary structure, homodimer.

The protein localises to the cytoplasm. It carries out the reaction glycyl-tRNA(Ala) + H2O = tRNA(Ala) + glycine + H(+). The catalysed reaction is a D-aminoacyl-tRNA + H2O = a tRNA + a D-alpha-amino acid + H(+). In terms of biological role, an aminoacyl-tRNA editing enzyme that deacylates mischarged D-aminoacyl-tRNAs. Also deacylates mischarged glycyl-tRNA(Ala), protecting cells against glycine mischarging by AlaRS. Acts via tRNA-based rather than protein-based catalysis; rejects L-amino acids rather than detecting D-amino acids in the active site. By recycling D-aminoacyl-tRNA to D-amino acids and free tRNA molecules, this enzyme counteracts the toxicity associated with the formation of D-aminoacyl-tRNA entities in vivo and helps enforce protein L-homochirality. This Rhodococcus jostii (strain RHA1) protein is D-aminoacyl-tRNA deacylase.